Reading from the N-terminus, the 95-residue chain is Putative defensin-like protein 252 (95 aa).

The signal sequence occupies residues 1–27; that stretch reads MRCVTSFVVLCILMFLVVNNVKVDVKA. Intrachain disulfides connect C34–C93, C45–C72, C56–C85, and C70–C87.

Belongs to the DEFL family.

The protein localises to the secreted. In Arabidopsis thaliana (Mouse-ear cress), this protein is Putative defensin-like protein 252 (SCRL13).